The chain runs to 277 residues: Ras suppressor protein 1 (277 aa).

The tract at residues 1 to 23 (MSKSLKKLVEESREKNQPEVDMS) is disordered. At Ser-2 the chain carries N-acetylserine. Positions 7–23 (KLVEESREKNQPEVDMS) are enriched in basic and acidic residues. 7 LRR repeats span residues 41-63 (HITQLVLSHNKLTTVPPNVAELK), 64-85 (NLEVLNFFNNQIEELPTQISSL), 87-108 (KLKHLNLGMNRLNTLPRGFGSS), 110-133 (LLEVLELTYNNLNEHSLPGNFFYL), 135-156 (TLRALYLSDNDFEILPPDIGKL), 158-179 (KLQILSLRDNDLISLPKEIGEL), and 181-202 (QLKELHIQGNRLTVLPPELGNL). The tract at residues 250-277 (MQANPEPPKKNNDKSKKISRKPLAAKNK) is disordered. Residues 256-265 (PPKKNNDKSK) are compositionally biased toward basic and acidic residues.

Potentially plays a role in the Ras signal transduction pathway. Capable of suppressing v-Ras transformation in vitro. This chain is Ras suppressor protein 1 (Rsu1), found in Mus musculus (Mouse).